The primary structure comprises 317 residues: Ribosomal RNA small subunit methyltransferase H (317 aa).

S-adenosyl-L-methionine-binding positions include 30–32 (GGH), D50, Y74, D95, and Q102.

It belongs to the methyltransferase superfamily. RsmH family.

It is found in the cytoplasm. The catalysed reaction is cytidine(1402) in 16S rRNA + S-adenosyl-L-methionine = N(4)-methylcytidine(1402) in 16S rRNA + S-adenosyl-L-homocysteine + H(+). In terms of biological role, specifically methylates the N4 position of cytidine in position 1402 (C1402) of 16S rRNA. The polypeptide is Ribosomal RNA small subunit methyltransferase H (Nitrosomonas europaea (strain ATCC 19718 / CIP 103999 / KCTC 2705 / NBRC 14298)).